A 429-amino-acid chain; its full sequence is Histidine--tRNA ligase (429 aa).

The protein belongs to the class-II aminoacyl-tRNA synthetase family. As to quaternary structure, homodimer.

The protein localises to the cytoplasm. It catalyses the reaction tRNA(His) + L-histidine + ATP = L-histidyl-tRNA(His) + AMP + diphosphate + H(+). In Dechloromonas aromatica (strain RCB), this protein is Histidine--tRNA ligase.